Reading from the N-terminus, the 1336-residue chain is Cytokinesis protein sepH (1336 aa).

Residues methionine 1–glutamate 10 show a composition bias toward low complexity. The segment at methionine 1 to valine 46 is disordered. Residues lysine 36–valine 46 are compositionally biased toward basic and acidic residues. In terms of domain architecture, Protein kinase spans tyrosine 59–isoleucine 309. ATP-binding positions include leucine 65–valine 73 and lysine 88. Aspartate 181 (proton acceptor) is an active-site residue. Residues serine 368 to aspartate 402 are disordered. Over residues histidine 384 to aspartate 393 the composition is skewed to basic and acidic residues. Residues alanine 654–glutamate 682 adopt a coiled-coil conformation. Basic and acidic residues predominate over residues glutamate 1194–lysine 1205. The tract at residues glutamate 1194 to serine 1336 is disordered. A compositionally biased stretch (polar residues) spans threonine 1213–asparagine 1236. 2 stretches are compositionally biased toward low complexity: residues proline 1253–proline 1264 and proline 1272–serine 1285. Residues serine 1315–proline 1327 are compositionally biased toward basic residues.

It belongs to the protein kinase superfamily. Ser/Thr protein kinase family. CDC7 subfamily. It depends on Mg(2+) as a cofactor.

It carries out the reaction L-seryl-[protein] + ATP = O-phospho-L-seryl-[protein] + ADP + H(+). The enzyme catalyses L-threonyl-[protein] + ATP = O-phospho-L-threonyl-[protein] + ADP + H(+). Its function is as follows. Required for early events during cytokinesis including localization of cytoskeletal components to the cytokinetic ring. In Aspergillus niger (strain ATCC MYA-4892 / CBS 513.88 / FGSC A1513), this protein is Cytokinesis protein sepH.